Consider the following 59-residue polypeptide: Cecropin-A1 (59 aa).

The first 23 residues, 1–23 (MNFTKLFAIVLLAALVLLGQTEA), serve as a signal peptide directing secretion.

Belongs to the cecropin family.

Its subcellular location is the secreted. Functionally, cecropins have lytic and antibacterial activity against several Gram-positive and Gram-negative bacteria. This chain is Cecropin-A1 (CECA1), found in Aedes albopictus (Asian tiger mosquito).